We begin with the raw amino-acid sequence, 105 residues long: Small ribosomal subunit protein uS10 (105 aa).

This sequence belongs to the universal ribosomal protein uS10 family. In terms of assembly, part of the 30S ribosomal subunit.

In terms of biological role, involved in the binding of tRNA to the ribosomes. The polypeptide is Small ribosomal subunit protein uS10 (Arthrospira platensis (Spirulina platensis)).